Consider the following 637-residue polypeptide: Probable ATP-binding protein YheS (637 aa).

ABC transporter domains are found at residues 2–246 (IVFS…AQQQ) and 313–527 (LKME…KQEN). ATP is bound by residues 34 to 41 (GKNGCGKS) and 345 to 352 (GRNGAGKS). The tract at residues 523 to 559 (QKQENQTDEAPKENANSAQARKDQKRREAELRAQTQP) is disordered. Over residues 542–553 (ARKDQKRREAEL) the composition is skewed to basic and acidic residues.

Belongs to the ABC transporter superfamily. ABCF family. YheS subfamily.

Genetic data indicate it may be involved in ribosome assembly or function. The chain is Probable ATP-binding protein YheS (yheS) from Escherichia coli O157:H7.